Here is a 114-residue protein sequence, read N- to C-terminus: Small nuclear ribonucleoprotein SmD1a (114 aa).

In terms of domain architecture, Sm spans 2–74 (KLVRFLMKLN…IRYYILPDSL (73 aa)). The interval 87–114 (VKPKKPVAGKAVGRGRGRGRGRGRGRGR) is disordered. A run of 8 repeats spans residues 99 to 100 (GR), 101 to 102 (GR), 103 to 104 (GR), 105 to 106 (GR), 107 to 108 (GR), 109 to 110 (GR), 111 to 112 (GR), and 113 to 114 (GR). The interval 99-114 (GRGRGRGRGRGRGRGR) is 8 X 2 AA tandem repeats of G-R.

Belongs to the snRNP core protein family.

It is found in the nucleus. The protein resides in the nucleus speckle. The protein localises to the nucleolus. Involved in splicing regulation. Facilitates post-transcriptional gene silencing (PTGS) by limiting the degradation of transgene aberrant RNAs by the RNA quality control (RQC) machinery, thus favoring their entry into cytoplasmic siRNA bodies where they can trigger PTGS. Does not participate in the production of small RNAs. The sequence is that of Small nuclear ribonucleoprotein SmD1a from Arabidopsis thaliana (Mouse-ear cress).